A 287-amino-acid polypeptide reads, in one-letter code: MFWRGGLPLVTIRNLLDNGVHFGHTTQRWNPKMKGFILTERCGSYILDMRETIRGIVTAVDFIRDTVARGGEVLFIGTKRQAQQVIFKQASRVGQHYIAHRWLGGLLTNFSTVSKSLVRMKELEEARLDDSVSTKKEQLIRGRELQKLRRSLGGIRNMTKLPALLWVVDTNREGIAVEEARKLGIPVVAILDSNCDPDLVQFPIPGNDDSIRSIELLTGIVADAVAQGLVERHKAPQDDIEPMAEWEKQLLQSGDSSGETRPISGTDRPLDGDLSKGPAPQDEELSD.

Residues 233–287 form a disordered region; it reads HKAPQDDIEPMAEWEKQLLQSGDSSGETRPISGTDRPLDGDLSKGPAPQDEELSD. The span at 250–259 shows a compositional bias: polar residues; it reads LLQSGDSSGE.

It belongs to the universal ribosomal protein uS2 family.

The chain is Small ribosomal subunit protein uS2 from Tropheryma whipplei (strain TW08/27) (Whipple's bacillus).